Reading from the N-terminus, the 365-residue chain is Mitogen-activated protein kinase HOG1A (365 aa).

The 280-residue stretch at 24 to 303 folds into the Protein kinase domain; the sequence is YTDLQPVGMG…AADALAHPYL (280 aa). Residues 30 to 38 and K53 each bind ATP; that span reads VGMGAFGLL. D145 acts as the Proton acceptor in catalysis. The residue at position 175 (T175) is a Phosphothreonine. A TXY motif is present at residues 175-177; that stretch reads TGY. At Y177 the chain carries Phosphotyrosine.

The protein belongs to the protein kinase superfamily. Ser/Thr protein kinase family. MAP kinase subfamily. HOG1 sub-subfamily. Requires Mg(2+) as cofactor. In terms of processing, phosphorylated. Dually phosphorylated on Thr-175 and Tyr-177, which activates the enzyme. Rapidly dephosphorylated upon either hypo- or hyperosmotic shock.

It localises to the cytoplasm. Its subcellular location is the nucleus. It carries out the reaction L-seryl-[protein] + ATP = O-phospho-L-seryl-[protein] + ADP + H(+). The catalysed reaction is L-threonyl-[protein] + ATP = O-phospho-L-threonyl-[protein] + ADP + H(+). With respect to regulation, activated by tyrosine and threonine phosphorylation. Its function is as follows. Proline-directed serine/threonine-protein kinase involved in a signal transduction pathway that is activated by changes in the osmolarity of the extracellular environment. Controls osmotic regulation of transcription of target genes. This chain is Mitogen-activated protein kinase HOG1A (HOG1A), found in Wallemia ichthyophaga (strain EXF-994 / CBS 113033).